A 213-amino-acid chain; its full sequence is Large ribosomal subunit protein uL1 (213 aa).

The protein belongs to the universal ribosomal protein uL1 family. As to quaternary structure, part of the 50S ribosomal subunit.

Binds directly to 23S rRNA. Probably involved in E site tRNA release. Functionally, protein L1 is also a translational repressor protein, it controls the translation of its operon by binding to its mRNA. This Methanococcus voltae protein is Large ribosomal subunit protein uL1.